The chain runs to 312 residues: Erlin (312 aa).

Topologically, residues 1–3 are cytoplasmic; sequence MLT. Residues 4–24 traverse the membrane as a helical segment; sequence ELALGLFALWIAIFSQALHKI. Over 25–312 the chain is Lumenal; that stretch reads EEGHVGVYYR…FVMGTTQQTV (288 aa). N-linked (GlcNAc...) asparagine glycosylation is present at Asn104.

This sequence belongs to the band 7/mec-2 family. As to quaternary structure, seems to form a multimeric complex. In terms of tissue distribution, expressed in the germline only.

It localises to the endoplasmic reticulum membrane. The polypeptide is Erlin (Caenorhabditis elegans).